The sequence spans 332 residues: Anthranilate phosphoribosyltransferase (332 aa).

5-phospho-alpha-D-ribose 1-diphosphate is bound by residues Gly79, 82-83, Ser87, 89-92, 107-115, and Ser119; these read GD, NIST, and KHGNRSVSS. Gly79 contacts anthranilate. Ser91 is a binding site for Mg(2+). Residue Asn110 participates in anthranilate binding. Arg165 lines the anthranilate pocket. Asp223 and Glu224 together coordinate Mg(2+).

The protein belongs to the anthranilate phosphoribosyltransferase family. As to quaternary structure, homodimer. The cofactor is Mg(2+).

The enzyme catalyses N-(5-phospho-beta-D-ribosyl)anthranilate + diphosphate = 5-phospho-alpha-D-ribose 1-diphosphate + anthranilate. It participates in amino-acid biosynthesis; L-tryptophan biosynthesis; L-tryptophan from chorismate: step 2/5. In terms of biological role, catalyzes the transfer of the phosphoribosyl group of 5-phosphorylribose-1-pyrophosphate (PRPP) to anthranilate to yield N-(5'-phosphoribosyl)-anthranilate (PRA). The sequence is that of Anthranilate phosphoribosyltransferase from Sodalis glossinidius (strain morsitans).